Reading from the N-terminus, the 544-residue chain is Chromosomal replication initiator protein DnaA (544 aa).

The domain I, interacts with DnaA modulators stretch occupies residues 1–71 (MNDFWQHCSA…ADMARDFWHT (71 aa)). Residues 71–207 (TPIDVQFVLD…GETDSMYERS (137 aa)) form a domain II region. The segment covering 90 to 105 (AAAPAPASARPASAPG) has biased composition (low complexity). Disordered regions lie at residues 90–111 (AAAP…GGSA) and 180–203 (AAAR…TDSM). Positions 191 to 200 (SAGSNGNGET) are enriched in polar residues. The segment at 208–424 (KLNPVLTFDN…GALRKILAYS (217 aa)) is domain III, AAA+ region. Residues glycine 252, glycine 254, lysine 255, and threonine 256 each contribute to the ATP site. Residues 425 to 544 (KFHGREITIE…LHVLEQTLKG (120 aa)) are domain IV, binds dsDNA.

Belongs to the DnaA family. As to quaternary structure, oligomerizes as a right-handed, spiral filament on DNA at oriC.

The protein localises to the cytoplasm. Its function is as follows. Plays an essential role in the initiation and regulation of chromosomal replication. ATP-DnaA binds to the origin of replication (oriC) to initiate formation of the DNA replication initiation complex once per cell cycle. Binds the DnaA box (a 9 base pair repeat at the origin) and separates the double-stranded (ds)DNA. Forms a right-handed helical filament on oriC DNA; dsDNA binds to the exterior of the filament while single-stranded (ss)DNA is stabiized in the filament's interior. The ATP-DnaA-oriC complex binds and stabilizes one strand of the AT-rich DNA unwinding element (DUE), permitting loading of DNA polymerase. After initiation quickly degrades to an ADP-DnaA complex that is not apt for DNA replication. Binds acidic phospholipids. The chain is Chromosomal replication initiator protein DnaA from Paraburkholderia xenovorans (strain LB400).